The chain runs to 294 residues: ATP phosphoribosyltransferase (294 aa).

The protein belongs to the ATP phosphoribosyltransferase family. Long subfamily. Mg(2+) serves as cofactor.

It is found in the cytoplasm. The catalysed reaction is 1-(5-phospho-beta-D-ribosyl)-ATP + diphosphate = 5-phospho-alpha-D-ribose 1-diphosphate + ATP. Its pathway is amino-acid biosynthesis; L-histidine biosynthesis; L-histidine from 5-phospho-alpha-D-ribose 1-diphosphate: step 1/9. Feedback inhibited by histidine. Functionally, catalyzes the condensation of ATP and 5-phosphoribose 1-diphosphate to form N'-(5'-phosphoribosyl)-ATP (PR-ATP). Has a crucial role in the pathway because the rate of histidine biosynthesis seems to be controlled primarily by regulation of HisG enzymatic activity. The chain is ATP phosphoribosyltransferase from Chlorobium phaeovibrioides (strain DSM 265 / 1930) (Prosthecochloris vibrioformis (strain DSM 265)).